The sequence spans 395 residues: Putative phosphatidate cytidylyltransferase (395 aa).

9 helical membrane-spanning segments follow: residues 13-33 (STVFVVLLIVFCFFLMFSAFA), 78-98 (FAFGLVIVLFISVIAVLMNWE), 115-135 (SLLSGIMVSGGMIPTFFVIYF), 144-164 (WIWTASFAGMIVFLWAVYMIS), 177-197 (IYSLGAVICFIACIGTIYFSV), 201-221 (WTTIFLLIAIGVCTDTFAYLF), 242-262 (AFFGVTGTVLTISIICVLYSI), 306-326 (FYIYWWVSTLALIFTASIFAI), and 358-378 (FDSSSFLISFFFIYHVIAGIS).

The protein belongs to the CDS family.

The protein localises to the cell membrane. It carries out the reaction a 1,2-diacyl-sn-glycero-3-phosphate + CTP + H(+) = a CDP-1,2-diacyl-sn-glycerol + diphosphate. It participates in phospholipid metabolism; CDP-diacylglycerol biosynthesis; CDP-diacylglycerol from sn-glycerol 3-phosphate: step 3/3. This chain is Putative phosphatidate cytidylyltransferase (cdsA), found in Mycoplasma pneumoniae (strain ATCC 29342 / M129 / Subtype 1) (Mycoplasmoides pneumoniae).